Here is a 219-residue protein sequence, read N- to C-terminus: Large ribosomal subunit protein uL1 (219 aa).

Belongs to the universal ribosomal protein uL1 family. As to quaternary structure, part of the 50S ribosomal subunit.

Probably involved in E site tRNA release. Binds directly to 23S rRNA. Its function is as follows. Protein L1 is also a translational repressor protein, it controls the translation of its operon by binding to its mRNA. In Methanocaldococcus jannaschii (strain ATCC 43067 / DSM 2661 / JAL-1 / JCM 10045 / NBRC 100440) (Methanococcus jannaschii), this protein is Large ribosomal subunit protein uL1.